The sequence spans 298 residues: Protein transport protein SEC13-1 (298 aa).

WD repeat units follow at residues 7 to 46, 51 to 92, 97 to 138, 143 to 196, 203 to 245, and 253 to 292; these read AHND…HKLV, GHEG…WSQI, VHTA…TATP, AHAI…QSYL, GHSD…GPWV, and EFPD…KWES.

It belongs to the WD repeat SEC13 family. As to quaternary structure, the COPII coat is composed of at least 5 proteins: the SEC23/24 complex, the SEC13/31 complex, and the protein SAR1. Component of the nuclear pore complex (NPC). NPC constitutes the exclusive means of nucleocytoplasmic transport. NPCs allow the passive diffusion of ions and small molecules and the active, nuclear transport receptor-mediated bidirectional transport of macromolecules such as proteins, RNAs, ribonucleoparticles (RNPs), and ribosomal subunits across the nuclear envelope. Due to its 8-fold rotational symmetry, all subunits are present with 8 copies or multiples thereof.

The protein resides in the cytoplasmic vesicle. The protein localises to the COPII-coated vesicle membrane. It is found in the endoplasmic reticulum membrane. Its subcellular location is the nucleus. It localises to the nuclear pore complex. Component of the coat protein complex II (COPII) which promotes the formation of transport vesicles from the endoplasmic reticulum (ER). The coat has two main functions, the physical deformation of the endoplasmic reticulum membrane into vesicles and the selection of cargo molecules. It also functions as a component of the nuclear pore complex (NPC). NPC components, collectively referred to as nucleoporins (NUPs), can play the role of both NPC structural components and of docking or interaction partners for transiently associated nuclear transport factors. SEC13 is required for efficient mRNA export from the nucleus to the cytoplasm and for correct nuclear pore biogenesis and distribution. The polypeptide is Protein transport protein SEC13-1 (SEC131) (Candida glabrata (strain ATCC 2001 / BCRC 20586 / JCM 3761 / NBRC 0622 / NRRL Y-65 / CBS 138) (Yeast)).